A 210-amino-acid chain; its full sequence is Probable septum site-determining protein MinC (210 aa).

Belongs to the MinC family. Interacts with MinD and FtsZ.

Its function is as follows. Cell division inhibitor that blocks the formation of polar Z ring septums. Rapidly oscillates between the poles of the cell to destabilize FtsZ filaments that have formed before they mature into polar Z rings. Prevents FtsZ polymerization. In Thermotoga sp. (strain RQ2), this protein is Probable septum site-determining protein MinC.